Reading from the N-terminus, the 88-residue chain is Small ribosomal subunit protein uS17 (88 aa).

This sequence belongs to the universal ribosomal protein uS17 family. Part of the 30S ribosomal subunit.

One of the primary rRNA binding proteins, it binds specifically to the 5'-end of 16S ribosomal RNA. In Dechloromonas aromatica (strain RCB), this protein is Small ribosomal subunit protein uS17.